Consider the following 181-residue polypeptide: UPF0232 protein SAV_4320 (181 aa).

The segment covering methionine 1 to glutamate 10 has biased composition (polar residues). Disordered regions lie at residues methionine 1–proline 64 and glutamine 156–glycine 181. Residues alanine 30–glycine 39 show a composition bias toward basic and acidic residues.

Belongs to the UPF0232 family.

This is UPF0232 protein SAV_4320 from Streptomyces avermitilis (strain ATCC 31267 / DSM 46492 / JCM 5070 / NBRC 14893 / NCIMB 12804 / NRRL 8165 / MA-4680).